The following is a 613-amino-acid chain: Arginine--tRNA ligase (613 aa).

A 'HIGH' region motif is present at residues 123-133; the sequence is PNVAKPMHVGH.

This sequence belongs to the class-I aminoacyl-tRNA synthetase family. Monomer.

It localises to the cytoplasm. The catalysed reaction is tRNA(Arg) + L-arginine + ATP = L-arginyl-tRNA(Arg) + AMP + diphosphate. The sequence is that of Arginine--tRNA ligase from Caulobacter sp. (strain K31).